A 360-amino-acid chain; its full sequence is Ribosomal RNA large subunit methyltransferase M (360 aa).

S-adenosyl-L-methionine-binding positions include Ser190, 223–226 (CPGG), Asp242, Asp262, and Asp280. Lys309 acts as the Proton acceptor in catalysis.

Belongs to the class I-like SAM-binding methyltransferase superfamily. RNA methyltransferase RlmE family. RlmM subfamily. As to quaternary structure, monomer.

It is found in the cytoplasm. It catalyses the reaction cytidine(2498) in 23S rRNA + S-adenosyl-L-methionine = 2'-O-methylcytidine(2498) in 23S rRNA + S-adenosyl-L-homocysteine + H(+). Functionally, catalyzes the 2'-O-methylation at nucleotide C2498 in 23S rRNA. This chain is Ribosomal RNA large subunit methyltransferase M, found in Haemophilus ducreyi (strain 35000HP / ATCC 700724).